The chain runs to 371 residues: uncharacterized protein (371 aa).

It belongs to the glycerate kinase type-1 family.

This is an uncharacterized protein from Synechocystis sp. (strain ATCC 27184 / PCC 6803 / Kazusa).